The sequence spans 226 residues: DELTA-thalatoxin-Avl1b (226 aa).

A signal peptide spans 1–21 (MRHFVVFLYMFLALSIPTAFA). A propeptide spanning residues 22–45 (KKHIVTKKGNHQDITNDNEGENAE) is cleaved from the precursor. Positions 50-59 (AVAGAVIAGG) are plays an important role in the hemolytic activity. The segment at 58–77 (GGELALKILTKILDEIGKID) is N-terminal region. The phosphocholine site is built by Ser101, Val134, Ser152, Pro154, Tyr180, and Tyr184. Residues 152–167 (SVPFDYNLYTNWWNVK) are trp-rich region, which is important for the binding to lipid membrane. The Cell attachment site, crucial for protein stability signature appears at 191-193 (KPS).

Belongs to the actinoporin family. Sea anemone subfamily. As to quaternary structure, octamer or nonamer in membranes. Monomer in the soluble state.

The protein localises to the secreted. The protein resides in the nematocyst. It is found in the target cell membrane. Functionally, pore-forming protein that forms cations-selective hydrophilic pores of around 1 nm and causes cytolysis. Pore formation is a multi-step process that involves specific recognition of membrane sphingomyelin (but neither cholesterol nor phosphatidylcholine) using aromatic rich region and adjacent phosphocholine (POC) binding site, firm binding to the membrane (mainly driven by hydrophobic interactions) accompanied by the transfer of the N-terminal region to the lipid-water interface and finally pore formation after oligomerization of monomers. The chain is DELTA-thalatoxin-Avl1b from Actineria villosa (Okinawan sea anemone).